Reading from the N-terminus, the 308-residue chain is Ribosome maturation factor RimP (308 aa).

3 disordered regions span residues 1 to 31 (MARAGESGRAGVRRSTAPSRRTGGARAAADA), 94 to 113 (EDIGTDGAGGTGGSGGAAGG), and 249 to 308 (DLDE…EMNR). Over residues 17–31 (APSRRTGGARAAADA) the composition is skewed to low complexity. The segment covering 99-113 (DGAGGTGGSGGAAGG) has biased composition (gly residues). The segment covering 249-269 (DLDEGLEDDDGLEDEDDEDEY) has biased composition (acidic residues).

This sequence belongs to the RimP family.

The protein resides in the cytoplasm. Required for maturation of 30S ribosomal subunits. The chain is Ribosome maturation factor RimP from Parafrankia sp. (strain EAN1pec).